Reading from the N-terminus, the 355-residue chain is Galactoside 2-alpha-L-fucosyltransferase (355 aa).

Residues 1–15 (MRNVKGLFSYMTKTK) are Cytoplasmic-facing. Residues 16–36 (SFYISIIVIIFIIFIVNRMGP) form a helical; Signal-anchor for type II membrane protein membrane-spanning segment. Residues 37–355 (RNYNYKQIGT…MSRNGSIISK (319 aa)) are Lumenal-facing. Residues N92, N311, and N349 are each glycosylated (N-linked (GlcNAc...) asparagine).

This sequence belongs to the glycosyltransferase 11 family. In terms of tissue distribution, expression is restricted to the 20 intestinal cells in larvae and adult.

The protein localises to the golgi apparatus. It localises to the golgi stack membrane. Its pathway is protein modification; protein glycosylation. In terms of biological role, selectively catalyzes the addition of fucose in alpha 1-2 linkage to Gal-beta-(1-&gt;4)-Xyl-beta-R, Gal-beta-(1-&gt;6)-GlcNAc-R, Gal-beta-(1-&gt;3)-Gal-beta-(1-&gt;4)-Glc and Gal-beta-(1-&gt;3)-Gal-beta-(1-&gt;4)-Xyl-R acceptors but not Gal-beta-(1-&gt;3)-GlcNAc-beta-(1-&gt;3)-Gal-beta-(1-&gt;4)-Glc. Unlike in mammals, unable to fucosylate Gal-beta-(1-&gt;4)-Glc-beta-R. In Caenorhabditis elegans, this protein is Galactoside 2-alpha-L-fucosyltransferase.